The following is a 660-amino-acid chain: Long chain acyl-CoA synthetase 1 (660 aa).

225 to 236 (IMYTSGTSGDPK) serves as a coordination point for ATP. Residues 492–516 (DGWFHTGDIGEILPNGVLKIIDRKK) are fatty acid-binding.

This sequence belongs to the ATP-dependent AMP-binding enzyme family. Mg(2+) serves as cofactor. In terms of tissue distribution, epidermal-specific expression along the entire stem. In cauline leaves, was expressed over the entire leaf surface, most strongly in trichomes and guard cells, but not in mesophyll cells. In flowers, the expression was detected in the stigma and filaments of the stamens, and in the carpel was expressed specifically in ovaries. In roots, was expressed in primary and lateral roots, but not in the root tips.

Its subcellular location is the endoplasmic reticulum. The catalysed reaction is a long-chain fatty acid + ATP + CoA = a long-chain fatty acyl-CoA + AMP + diphosphate. It participates in lipid metabolism; fatty acid metabolism. Its function is as follows. Activation of long-chain fatty acids for both synthesis of cellular lipids, and degradation via beta-oxidation. Acts in both the wax and cutin pathways. Preferentially uses palmitate, palmitoleate, linoleate and eicosenoate. Seems to have a specific activity against very long-chain fatty acid (VLCFA) class with acids longer than 24 carbons (C(24)). In Arabidopsis thaliana (Mouse-ear cress), this protein is Long chain acyl-CoA synthetase 1 (LACS1).